We begin with the raw amino-acid sequence, 490 residues long: Nicotinate phosphoribosyltransferase (490 aa).

Histidine 206 carries the phosphohistidine modification.

This sequence belongs to the NAPRTase family. In terms of processing, transiently phosphorylated on a His residue during the reaction cycle. Phosphorylation strongly increases the affinity for substrates and increases the rate of nicotinate D-ribonucleotide production. Dephosphorylation regenerates the low-affinity form of the enzyme, leading to product release.

The enzyme catalyses nicotinate + 5-phospho-alpha-D-ribose 1-diphosphate + ATP + H2O = nicotinate beta-D-ribonucleotide + ADP + phosphate + diphosphate. It functions in the pathway cofactor biosynthesis; NAD(+) biosynthesis; nicotinate D-ribonucleotide from nicotinate: step 1/1. Its function is as follows. Catalyzes the synthesis of beta-nicotinate D-ribonucleotide from nicotinate and 5-phospho-D-ribose 1-phosphate at the expense of ATP. The chain is Nicotinate phosphoribosyltransferase (pncB) from Bacillus subtilis (strain 168).